A 204-amino-acid chain; its full sequence is Leucyl/phenylalanyl-tRNA--protein transferase (204 aa).

It belongs to the L/F-transferase family.

The protein resides in the cytoplasm. It catalyses the reaction N-terminal L-lysyl-[protein] + L-leucyl-tRNA(Leu) = N-terminal L-leucyl-L-lysyl-[protein] + tRNA(Leu) + H(+). The enzyme catalyses N-terminal L-arginyl-[protein] + L-leucyl-tRNA(Leu) = N-terminal L-leucyl-L-arginyl-[protein] + tRNA(Leu) + H(+). The catalysed reaction is L-phenylalanyl-tRNA(Phe) + an N-terminal L-alpha-aminoacyl-[protein] = an N-terminal L-phenylalanyl-L-alpha-aminoacyl-[protein] + tRNA(Phe). Its function is as follows. Functions in the N-end rule pathway of protein degradation where it conjugates Leu, Phe and, less efficiently, Met from aminoacyl-tRNAs to the N-termini of proteins containing an N-terminal arginine or lysine. The sequence is that of Leucyl/phenylalanyl-tRNA--protein transferase from Rhizobium johnstonii (strain DSM 114642 / LMG 32736 / 3841) (Rhizobium leguminosarum bv. viciae).